A 682-amino-acid chain; its full sequence is MATLADSAICFLLLSLLLIGACLVTPTEGRAKDDRRTRGRGSSSGVLSSSSSSSNNMNNGYYSGSSSTAGSSSGYVFTSSSAVNSGSTGYSGPMDSTGFCTRRRDMKLMCYCTPDENHVPVQKAECWVFSEGLHQNDTTWTRFYQQKRLRELKFVIQNNARLDYIPTMIIEPLKNLSSIVIEYSQVEIVKSYAFANLPFLERIILNNNHIMALDQDAFANHIRLRELNLEHNQIFEMDRYAFRNLPLCERLFLNNNNISTLHEGLFADMARLTFLNLAHNQINVLTSEIFRGLGNLNVLKLTRNNLNFIGDTVFAELWSLSELELDDNRIERISERALDGLNTLKTLNLRNNLLKKIDNGLLRGTPALLSINVQANKLETLTFYTFQPIMDNLVNSTSELLVSDNKFICDCRLQWIFELKNRTRHLQLRDSLEDLHCTLQEPKLSHFVDPVPPTILDVLNIGGFTAIGSNSASMGGVGNSVVGSSYSGLTMDDSRKHLGSRSRQALRGQRQFASSAENVVESKMRRRRKRQEEVKEKDLAAVAPAHKRYDYYDDNNGGMSLGHGLDLDDNLSLHKQGFYGAGSPVVGHNDVDVLMTSHSASGDALDILTTKNAIYIKLFLLKPEMLPCHDELSDPTELPLSRDLMDVRSNVGQDMSTAGANSLAQGMTIIVSLVALMMISRG.

The signal sequence occupies residues 1 to 24; sequence MATLADSAICFLLLSLLLIGACLV. The disordered stretch occupies residues 29-54; the sequence is GRAKDDRRTRGRGSSSGVLSSSSSSS. Residues 40 to 54 are compositionally biased toward low complexity; it reads RGSSSGVLSSSSSSS. 11 LRR repeats span residues 149-172, 173-196, 199-220, 223-244, 247-268, 271-292, 295-316, 319-342, 343-364, 367-388, and 389-404; these read LREL…IIEP, LKNL…AFAN, FLER…AFAN, RLRE…AFRN, LCER…LFAD, RLTF…IFRG, NLNV…VFAE, SLSE…DGLN, TLKT…LLRG, ALLS…TFQP, and IMDN…LVSD. An LRRCT domain is found at 405–462; sequence NKFICDCRLQWIFELKNRTRHLQLRDSLEDLHCTLQEPKLSHFVDPVPPTILDVLNIG. Positions 503–536 are disordered; that stretch reads RQALRGQRQFASSAENVVESKMRRRRKRQEEVKE. Residue alanine 658 is the site of GPI-anchor amidated alanine attachment. Positions 659 to 682 are cleaved as a propeptide — removed in mature form; it reads GANSLAQGMTIIVSLVALMMISRG.

As to expression, predominantly expressed in abdominal and thoracic segment muscle and motorneuron cells.

It is found in the cell membrane. Its function is as follows. Cell adhesion protein involved in target recognition during neuromuscular development. Mediates homophilic cellular adhesion. The chain is Connectin (Con) from Drosophila melanogaster (Fruit fly).